The following is a 202-amino-acid chain: Thymidine kinase (202 aa).

ATP contacts are provided by residues 16–23 (GPMFSGKS) and 99–102 (DEVQ). Residue glutamate 100 is the Proton acceptor of the active site. The Zn(2+) site is built by cysteine 156, cysteine 159, cysteine 194, and histidine 197.

It belongs to the thymidine kinase family. As to quaternary structure, homotetramer.

The protein resides in the cytoplasm. The catalysed reaction is thymidine + ATP = dTMP + ADP + H(+). In Deinococcus deserti (strain DSM 17065 / CIP 109153 / LMG 22923 / VCD115), this protein is Thymidine kinase.